The primary structure comprises 1395 residues: uncharacterized protein (1395 aa).

Position 89-96 (89-96) interacts with ATP; that stretch reads AYKKWGKS. Disordered regions lie at residues 146–166 and 205–391; these read EEKI…LSPP and SSSS…MENR. Low complexity-rich tracts occupy residues 155-166 and 205-222; these read GSPSPEAELSPP and SSSS…TSSP. Residues 230–269 show a composition bias toward basic and acidic residues; sequence EVTKERSSEVPTTVHEKTQSKSKNEKENKFSNGTIEEKPA. Residues 287–301 show a composition bias toward low complexity; that stretch reads SWSSGSSEAGSSSSG. The span at 313–328 shows a compositional bias: basic residues; sequence VKVRHKAREIRNKKGR. The span at 337 to 346 shows a compositional bias: basic and acidic residues; that stretch reads KHGEKAERNI. Low complexity predominate over residues 349 to 358; that stretch reads GSSSSSSSGS. The span at 369–391 shows a compositional bias: basic and acidic residues; sequence PLKEIGRKDPGSTEGKDLYMENR. Serine 814 and serine 1080 each carry phosphoserine. The disordered stretch occupies residues 1110–1132; sequence PISASELSPGGGSESEFESEKDE. 2 positions are modified to phosphoserine: serine 1194 and serine 1338. Over residues 1346-1359 the composition is skewed to basic and acidic residues; that stretch reads TGERDSGAKSDGFR. Residues 1346 to 1395 form a disordered region; the sequence is TGERDSGAKSDGFRGKMCSSASSTSEETGSEGGGEWVGPSEEELFSRTHL.

This is an uncharacterized protein from Homo sapiens (Human).